A 271-amino-acid polypeptide reads, in one-letter code: Autophagy-related protein 5 (271 aa).

Lys-145 is covalently cross-linked (Glycyl lysine isopeptide (Lys-Gly) (interchain with G-Cter in ATG12)).

The protein belongs to the ATG5 family. As to quaternary structure, conjugated with ATG12. Interacts with ATG10. The ATG5-ATG12 conjugate forms a complex with several units of ATG16. The ATG12-ATG5 conjugate also associates with ATG3. In terms of processing, conjugated to ATG12; which is essential for autophagy. Conjugation with ATG12 involves ATG7 as an E1-like activating enzyme and ATG10 as an E2-like conjugating enzyme.

It localises to the preautophagosomal structure membrane. Its function is as follows. Involved in cytoplasm to vacuole transport (Cvt) and autophagic vesicle formation. Autophagy is essential for maintenance of amino acid levels and protein synthesis under nitrogen starvation. Required for selective autophagic degradation of the nucleus (nucleophagy). Also required for mitophagy, which eliminates defective or superfluous mitochondria in order to fulfill cellular energy requirements and prevent excess ROS production. Conjugation with ATG12, through a ubiquitin-like conjugating system involving ATG7 as an E1-like activating enzyme and ATG10 as an E2-like conjugating enzyme, is essential for its function. The ATG12-ATG5 conjugate acts as an E3-like enzyme which is required for lipidation of ATG8 and ATG8 association to the vesicle membranes. ATG12-ATG5 rearranges the ATG3 catalytic center and enhances its E2 activity. The sequence is that of Autophagy-related protein 5 from Kluyveromyces marxianus (strain DMKU3-1042 / BCC 29191 / NBRC 104275) (Yeast).